The primary structure comprises 99 residues: Small ribosomal subunit protein bS6c (99 aa).

It belongs to the bacterial ribosomal protein bS6 family.

The protein localises to the plastid. The protein resides in the chloroplast. In terms of biological role, binds together with bS18 to 16S ribosomal RNA. This is Small ribosomal subunit protein bS6c from Cyanidioschyzon merolae (strain NIES-3377 / 10D) (Unicellular red alga).